Reading from the N-terminus, the 738-residue chain is Ethylene receptor (738 aa).

A run of 3 helical transmembrane segments spans residues isoleucine 23–valine 43, valine 54–tryptophan 74, and isoleucine 89–isoleucine 109. Cu cation-binding residues include cysteine 65 and histidine 69. One can recognise a GAF domain in the interval aspartate 158 to leucine 307. A Histidine kinase domain is found at valine 350–glutamate 589. Histidine 353 is subject to Phosphohistidine; by autocatalysis. Positions lysine 615–leucine 730 constitute a Response regulatory domain. Position 663 is a 4-aspartylphosphate (aspartate 663).

This sequence belongs to the ethylene receptor family. As to quaternary structure, homodimer; disulfide-linked. Requires Cu cation as cofactor. Post-translationally, activation probably requires a transfer of a phosphate group between a His in the transmitter domain and an Asp of the receiver domain. As to expression, higher expression in arils than in seeds.

Its subcellular location is the endoplasmic reticulum membrane. It carries out the reaction ATP + protein L-histidine = ADP + protein N-phospho-L-histidine.. Its function is as follows. May act early in the ethylene signal transduction pathway, possibly as an ethylene receptor, or as a regulator of the pathway. The sequence is that of Ethylene receptor (ETR1) from Passiflora edulis (Passion fruit).